The chain runs to 407 residues: 1-deoxy-D-xylulose 5-phosphate reductoisomerase (407 aa).

Positions 25, 26, 27, 28, 53, and 136 each coordinate NADPH. K137 is a 1-deoxy-D-xylulose 5-phosphate binding site. E138 provides a ligand contact to NADPH. D162 contacts Mn(2+). Positions 163, 164, 188, and 211 each coordinate 1-deoxy-D-xylulose 5-phosphate. E164 contributes to the Mn(2+) binding site. G217 contributes to the NADPH binding site. 1-deoxy-D-xylulose 5-phosphate contacts are provided by S224, N229, K230, and E233. E233 provides a ligand contact to Mn(2+).

The protein belongs to the DXR family. Requires Mg(2+) as cofactor. Mn(2+) is required as a cofactor.

It carries out the reaction 2-C-methyl-D-erythritol 4-phosphate + NADP(+) = 1-deoxy-D-xylulose 5-phosphate + NADPH + H(+). It participates in isoprenoid biosynthesis; isopentenyl diphosphate biosynthesis via DXP pathway; isopentenyl diphosphate from 1-deoxy-D-xylulose 5-phosphate: step 1/6. Its function is as follows. Catalyzes the NADPH-dependent rearrangement and reduction of 1-deoxy-D-xylulose-5-phosphate (DXP) to 2-C-methyl-D-erythritol 4-phosphate (MEP). The polypeptide is 1-deoxy-D-xylulose 5-phosphate reductoisomerase (Rhodopseudomonas palustris (strain BisA53)).